Reading from the N-terminus, the 191-residue chain is SCO2-like protein RP031 (191 aa).

This sequence belongs to the SCO1/2 family.

This is SCO2-like protein RP031 from Rickettsia prowazekii (strain Madrid E).